The primary structure comprises 234 residues: UPF0173 metal-dependent hydrolase RL2074 (234 aa).

This sequence belongs to the UPF0173 family.

The protein is UPF0173 metal-dependent hydrolase RL2074 of Rhizobium johnstonii (strain DSM 114642 / LMG 32736 / 3841) (Rhizobium leguminosarum bv. viciae).